The primary structure comprises 929 residues: MGGSCAQRRRAGPRQVLFPLLLPLFYPTLCEPIRYSIPEELAKGSVVGNLAKDLGLSVLDVSARELRVSAEKLHFSVDAQSGDLLVKDRIDREQICKERRRCELQLEAVVENPLNIFHVIVVIEDVNDHAPQFRKDEINLEISESVSLGMGTILESAEDPDISMNSLSKYQLSPNEYFSLVEKDNPDGGKYPELVLQKTLDRETQSAHHLVLTALDGGDPPRSGTAQIRILVIDANDNPPVFSQDVYRVSLREDVPPGTSILRVKATDQDEGINSEITYSFFGVADKAQHVFSLDYTTGNILTQQPLDFEEVERYTINIEAKDRGSLSTRCKVIVEVVDENDNSPEIIITSLSDQIMEDSPPGVVVALFKTRDQDSGENGEVRCSLSRGVPFKIHSSSNNYYKLVTDEALDREQTPEYNVTIAATDRGKPPLSSSKTITLHITDVNDNAPVFGQSAYLVHVPENNQPGASIAQVSASDPDFGLNGRVSYSLIASDLESRTLSSYVSVSAQSGVVFAQRAFDHEQLRTFELTLQARDQGSPALSANVSLRVLVGDRNDNAPRVLYPALGPDGSALFDTVPRAAQPGYLVTKVVAVDADSGHNAWLSYHVVQASEPGLFSLGLRTGEVRMVRALGDKDSVRQRLLVAVRDGGQPPLSATATLHLVFADSLQEVLPDFSDHPTPSDSQAEMQFYLVVALALISVLFLLAVILAIALRLRQSFSPTAGDCFESVLCSKSGPVGPPNYSEGTLPYAYNFCVPGDQMNPEFNFFTSVDHCPATQDNLNKDSMLLASILTPSVEADKKILKQQAPPNTDWRFSQAQRPGTSGSQNGDDTGTWPNNQFDTEMLQAMILASASEAADGSSTLGGGAGTMGLSARYGPQFTLQHVPDYRQNVYIPGSNATLTNAAGKRDGKAPAGGNGNKKKSGKKEKK.

Residues 1–30 (MGGSCAQRRRAGPRQVLFPLLLPLFYPTLC) form the signal peptide. Cadherin domains follow at residues 31–133 (EPIR…APQF), 134–242 (RKDE…PPVF), 243–347 (SQDV…SPEI), 348–452 (IITS…APVF), 453–562 (GQSA…APRV), and 570–675 (DGSA…LPDF). Over 31–691 (EPIRYSIPEE…SDSQAEMQFY (661 aa)) the chain is Extracellular. N-linked (GlcNAc...) asparagine glycans are attached at residues N419 and N545. The helical transmembrane segment at 692 to 712 (LVVALALISVLFLLAVILAIA) threads the bilayer. The Cytoplasmic segment spans residues 713–929 (LRLRQSFSPT…KKKSGKKEKK (217 aa)). Disordered stretches follow at residues 806 to 838 (QAPP…WPNN) and 899 to 929 (ATLT…KEKK). The span at 807–838 (APPNTDWRFSQAQRPGTSGSQNGDDTGTWPNN) shows a compositional bias: polar residues. Over residues 919–929 (NKKKSGKKEKK) the composition is skewed to basic residues.

It is found in the cell membrane. Functionally, potential calcium-dependent cell-adhesion protein. May be involved in the establishment and maintenance of specific neuronal connections in the brain. In Homo sapiens (Human), this protein is Protocadherin gamma-B7 (PCDHGB7).